An 81-amino-acid polypeptide reads, in one-letter code: uncharacterized protein (81 aa).

The first 20 residues, 1–20 (MIDDHEALLLLVLSSGPAAL), serve as a signal peptide directing secretion.

This is an uncharacterized protein from Treponema pallidum (strain Nichols).